Reading from the N-terminus, the 31-residue chain is U14-ctenitoxin-Co1a (31 aa).

Disulfide bonds are present. Expressed by the venom gland.

The protein localises to the secreted. Functionally, omega-agatoxins are antagonists of voltage-gated calcium channels (Cav). This Ctenus ornatus (Brazilian spider) protein is U14-ctenitoxin-Co1a.